The sequence spans 335 residues: Holliday junction branch migration complex subunit RuvB (335 aa).

The segment at 1–181 is large ATPase domain (RuvB-L); the sequence is MTRILDNDLI…FGITGHMEYY (181 aa). ATP contacts are provided by residues leucine 20, arginine 21, glycine 62, lysine 65, threonine 66, threonine 67, 128–130, arginine 171, tyrosine 181, and arginine 218; that span reads EDF. Mg(2+) is bound at residue threonine 66. The tract at residues 182–252 is small ATPAse domain (RuvB-S); sequence QTADLTEIVE…ITDKALTMLD (71 aa). Residues 255–335 form a head domain (RuvB-H) region; the sequence is QEGLDYVDQK…GYPYEKTIKT (81 aa). DNA-binding residues include arginine 291, arginine 310, arginine 312, and arginine 315.

Belongs to the RuvB family. In terms of assembly, homohexamer. Forms an RuvA(8)-RuvB(12)-Holliday junction (HJ) complex. HJ DNA is sandwiched between 2 RuvA tetramers; dsDNA enters through RuvA and exits via RuvB. An RuvB hexamer assembles on each DNA strand where it exits the tetramer. Each RuvB hexamer is contacted by two RuvA subunits (via domain III) on 2 adjacent RuvB subunits; this complex drives branch migration. In the full resolvosome a probable DNA-RuvA(4)-RuvB(12)-RuvC(2) complex forms which resolves the HJ.

It localises to the cytoplasm. It catalyses the reaction ATP + H2O = ADP + phosphate + H(+). In terms of biological role, the RuvA-RuvB-RuvC complex processes Holliday junction (HJ) DNA during genetic recombination and DNA repair, while the RuvA-RuvB complex plays an important role in the rescue of blocked DNA replication forks via replication fork reversal (RFR). RuvA specifically binds to HJ cruciform DNA, conferring on it an open structure. The RuvB hexamer acts as an ATP-dependent pump, pulling dsDNA into and through the RuvAB complex. RuvB forms 2 homohexamers on either side of HJ DNA bound by 1 or 2 RuvA tetramers; 4 subunits per hexamer contact DNA at a time. Coordinated motions by a converter formed by DNA-disengaged RuvB subunits stimulates ATP hydrolysis and nucleotide exchange. Immobilization of the converter enables RuvB to convert the ATP-contained energy into a lever motion, pulling 2 nucleotides of DNA out of the RuvA tetramer per ATP hydrolyzed, thus driving DNA branch migration. The RuvB motors rotate together with the DNA substrate, which together with the progressing nucleotide cycle form the mechanistic basis for DNA recombination by continuous HJ branch migration. Branch migration allows RuvC to scan DNA until it finds its consensus sequence, where it cleaves and resolves cruciform DNA. The polypeptide is Holliday junction branch migration complex subunit RuvB (Streptococcus equi subsp. equi (strain 4047)).